The chain runs to 182 residues: NADH-quinone oxidoreductase subunit I (182 aa).

4Fe-4S ferredoxin-type domains lie at 52–82 (LTRDPDGEERCVACNLCAVACPVGCISLQKA) and 92–121 (DFFRINFSRCIFCGLCEEACPTTAIQLTPD). 8 residues coordinate [4Fe-4S] cluster: Cys62, Cys65, Cys68, Cys72, Cys101, Cys104, Cys107, and Cys111.

The protein belongs to the complex I 23 kDa subunit family. NDH-1 is composed of 13 different subunits. Subunits NuoA, H, J, K, L, M, N constitute the membrane sector of the complex. [4Fe-4S] cluster serves as cofactor.

The protein localises to the cell inner membrane. It catalyses the reaction a quinone + NADH + 5 H(+)(in) = a quinol + NAD(+) + 4 H(+)(out). NDH-1 shuttles electrons from NADH, via FMN and iron-sulfur (Fe-S) centers, to quinones in the respiratory chain. The immediate electron acceptor for the enzyme in this species is believed to be ubiquinone. Couples the redox reaction to proton translocation (for every two electrons transferred, four hydrogen ions are translocated across the cytoplasmic membrane), and thus conserves the redox energy in a proton gradient. The polypeptide is NADH-quinone oxidoreductase subunit I (Pseudomonas syringae pv. tomato (strain ATCC BAA-871 / DC3000)).